The primary structure comprises 64 residues: SPbeta prophage-derived uncharacterized protein YonP (64 aa).

In Bacillus subtilis (strain 168), this protein is SPbeta prophage-derived uncharacterized protein YonP (yonP).